A 660-amino-acid chain; its full sequence is Bifunctional polymyxin resistance protein ArnA (660 aa).

The formyltransferase ArnAFT stretch occupies residues 1-304 (MKTVVFAYHD…TLGLVQGSRL (304 aa)). 86-88 (HLI) lines the (6R)-10-formyltetrahydrofolate pocket. The active-site Proton donor; for formyltransferase activity is the H104. Residues R114 and 136–140 (VKRAD) contribute to the (6R)-10-formyltetrahydrofolate site. The interval 314-660 (RRTRVLILGV…RTVDLTDKPS (347 aa)) is dehydrogenase ArnADH. NAD(+) contacts are provided by residues D347 and 368–369 (DI). UDP-alpha-D-glucuronate is bound by residues A393, Y398, and 432 to 433 (TS). E434 functions as the Proton acceptor; for decarboxylase activity in the catalytic mechanism. UDP-alpha-D-glucuronate-binding positions include R460, N492, 526-535 (KLIDGGKQKR), and Y613. Residue R619 is the Proton donor; for decarboxylase activity of the active site.

This sequence in the N-terminal section; belongs to the Fmt family. UDP-L-Ara4N formyltransferase subfamily. In the C-terminal section; belongs to the NAD(P)-dependent epimerase/dehydratase family. UDP-glucuronic acid decarboxylase subfamily. Homohexamer, formed by a dimer of trimers.

The enzyme catalyses UDP-alpha-D-glucuronate + NAD(+) = UDP-beta-L-threo-pentopyranos-4-ulose + CO2 + NADH. It catalyses the reaction UDP-4-amino-4-deoxy-beta-L-arabinose + (6R)-10-formyltetrahydrofolate = UDP-4-deoxy-4-formamido-beta-L-arabinose + (6S)-5,6,7,8-tetrahydrofolate + H(+). The protein operates within nucleotide-sugar biosynthesis; UDP-4-deoxy-4-formamido-beta-L-arabinose biosynthesis; UDP-4-deoxy-4-formamido-beta-L-arabinose from UDP-alpha-D-glucuronate: step 1/3. It participates in nucleotide-sugar biosynthesis; UDP-4-deoxy-4-formamido-beta-L-arabinose biosynthesis; UDP-4-deoxy-4-formamido-beta-L-arabinose from UDP-alpha-D-glucuronate: step 3/3. It functions in the pathway bacterial outer membrane biogenesis; lipopolysaccharide biosynthesis. Functionally, bifunctional enzyme that catalyzes the oxidative decarboxylation of UDP-glucuronic acid (UDP-GlcUA) to UDP-4-keto-arabinose (UDP-Ara4O) and the addition of a formyl group to UDP-4-amino-4-deoxy-L-arabinose (UDP-L-Ara4N) to form UDP-L-4-formamido-arabinose (UDP-L-Ara4FN). The modified arabinose is attached to lipid A and is required for resistance to polymyxin and cationic antimicrobial peptides. This chain is Bifunctional polymyxin resistance protein ArnA, found in Escherichia coli O157:H7.